The primary structure comprises 268 residues: Exopolysaccharide production negative regulator (268 aa).

The first 22 residues, Met1–Ala22, serve as a signal peptide directing secretion.

Negatively modulates exopolysaccharide (EPS) biosynthesis. In Rhizobium meliloti (strain 1021) (Ensifer meliloti), this protein is Exopolysaccharide production negative regulator (exoR).